The chain runs to 284 residues: Acetyl-coenzyme A carboxylase carboxyl transferase subunit beta (284 aa).

Positions 25–284 (MWVKCPGCSA…ILGILYRPAA (260 aa)) constitute a CoA carboxyltransferase N-terminal domain. Residues Cys-29, Cys-32, Cys-48, and Cys-51 each contribute to the Zn(2+) site. The segment at 29–51 (CPGCSATLLAKDLDANLNVCPTC) adopts a C4-type zinc-finger fold.

This sequence belongs to the AccD/PCCB family. In terms of assembly, acetyl-CoA carboxylase is a heterohexamer composed of biotin carboxyl carrier protein (AccB), biotin carboxylase (AccC) and two subunits each of ACCase subunit alpha (AccA) and ACCase subunit beta (AccD). It depends on Zn(2+) as a cofactor.

The protein resides in the cytoplasm. It carries out the reaction N(6)-carboxybiotinyl-L-lysyl-[protein] + acetyl-CoA = N(6)-biotinyl-L-lysyl-[protein] + malonyl-CoA. Its pathway is lipid metabolism; malonyl-CoA biosynthesis; malonyl-CoA from acetyl-CoA: step 1/1. Component of the acetyl coenzyme A carboxylase (ACC) complex. Biotin carboxylase (BC) catalyzes the carboxylation of biotin on its carrier protein (BCCP) and then the CO(2) group is transferred by the transcarboxylase to acetyl-CoA to form malonyl-CoA. The polypeptide is Acetyl-coenzyme A carboxylase carboxyl transferase subunit beta (Pelobacter propionicus (strain DSM 2379 / NBRC 103807 / OttBd1)).